The sequence spans 162 residues: Small ribosomal subunit protein uS9 (162 aa).

The protein belongs to the universal ribosomal protein uS9 family.

This is Small ribosomal subunit protein uS9 from Methylobacterium sp. (strain 4-46).